A 227-amino-acid polypeptide reads, in one-letter code: Cytochrome c oxidase subunit 2 (227 aa).

The Mitochondrial intermembrane portion of the chain corresponds to 1–14 (MPYPLQLGFQDATS). A helical transmembrane segment spans residues 15 to 45 (PIMEELLHFHDHTLMIVFLISSLVLYIITLM). Residues 46–59 (LTTKLTHTSTMDAQ) are Mitochondrial matrix-facing. The chain crosses the membrane as a helical span at residues 60–87 (EVETVWTILPAVILILIALPSLRILYMM). The Mitochondrial intermembrane portion of the chain corresponds to 88–227 (DEINNPLLTI…HFEDWSTSML (140 aa)). 6 residues coordinate Cu cation: histidine 161, cysteine 196, glutamate 198, cysteine 200, histidine 204, and methionine 207. Glutamate 198 lines the Mg(2+) pocket.

The protein belongs to the cytochrome c oxidase subunit 2 family. In terms of assembly, component of the cytochrome c oxidase (complex IV, CIV), a multisubunit enzyme composed of 14 subunits. The complex is composed of a catalytic core of 3 subunits MT-CO1, MT-CO2 and MT-CO3, encoded in the mitochondrial DNA, and 11 supernumerary subunits COX4I, COX5A, COX5B, COX6A, COX6B, COX6C, COX7A, COX7B, COX7C, COX8 and NDUFA4, which are encoded in the nuclear genome. The complex exists as a monomer or a dimer and forms supercomplexes (SCs) in the inner mitochondrial membrane with NADH-ubiquinone oxidoreductase (complex I, CI) and ubiquinol-cytochrome c oxidoreductase (cytochrome b-c1 complex, complex III, CIII), resulting in different assemblies (supercomplex SCI(1)III(2)IV(1) and megacomplex MCI(2)III(2)IV(2)). Found in a complex with TMEM177, COA6, COX18, COX20, SCO1 and SCO2. Interacts with TMEM177 in a COX20-dependent manner. Interacts with COX20. Interacts with COX16. Cu cation is required as a cofactor.

Its subcellular location is the mitochondrion inner membrane. The enzyme catalyses 4 Fe(II)-[cytochrome c] + O2 + 8 H(+)(in) = 4 Fe(III)-[cytochrome c] + 2 H2O + 4 H(+)(out). Functionally, component of the cytochrome c oxidase, the last enzyme in the mitochondrial electron transport chain which drives oxidative phosphorylation. The respiratory chain contains 3 multisubunit complexes succinate dehydrogenase (complex II, CII), ubiquinol-cytochrome c oxidoreductase (cytochrome b-c1 complex, complex III, CIII) and cytochrome c oxidase (complex IV, CIV), that cooperate to transfer electrons derived from NADH and succinate to molecular oxygen, creating an electrochemical gradient over the inner membrane that drives transmembrane transport and the ATP synthase. Cytochrome c oxidase is the component of the respiratory chain that catalyzes the reduction of oxygen to water. Electrons originating from reduced cytochrome c in the intermembrane space (IMS) are transferred via the dinuclear copper A center (CU(A)) of subunit 2 and heme A of subunit 1 to the active site in subunit 1, a binuclear center (BNC) formed by heme A3 and copper B (CU(B)). The BNC reduces molecular oxygen to 2 water molecules using 4 electrons from cytochrome c in the IMS and 4 protons from the mitochondrial matrix. The sequence is that of Cytochrome c oxidase subunit 2 (MT-CO2) from Dasypus novemcinctus (Nine-banded armadillo).